Consider the following 398-residue polypeptide: Serine/threonine-protein kinase UL13 (398 aa).

Positions 1-10 (MAAGGGGGGV) are enriched in gly residues. Residues 1 to 44 (MAAGGGGGGVSRAALARPPIHRGTSAPGGAIAAAGGDGDGDEAS) form a disordered region. In terms of domain architecture, Protein kinase spans 80-398 (TGDPVAVGAG…GGARFAELAA (319 aa)). ATP contacts are provided by residues 86–94 (VGAGSYGSV) and Lys-103. Residue Asp-194 is the Proton acceptor of the active site.

This sequence belongs to the protein kinase superfamily. Ser/Thr protein kinase family. Post-translationally, autophosphorylated.

Its subcellular location is the virion tegument. The protein resides in the host nucleus. It is found in the host cytoplasm. It localises to the host endoplasmic reticulum. It carries out the reaction L-seryl-[protein] + ATP = O-phospho-L-seryl-[protein] + ADP + H(+). The enzyme catalyses L-threonyl-[protein] + ATP = O-phospho-L-threonyl-[protein] + ADP + H(+). In terms of biological role, multifunctional serine/threonine kinase that plays a role in several processes including egress of virus particles from the nucleus, modulation of the actin cytoskeleton and regulation of viral and cellular gene expression. Regulates the nuclear localization of viral envelopment factors UL34 and UL31, by phosphorylating the US3 kinase, indicating a role in nuclear egress. Disrupts host nuclear lamins, including LMNA and LMNB1. Phosphorylates the viral Fc receptor composed of glycoproteins E (gE) and I (gI). Phosphorylation of glycoprotein E (gE) by UL13 alters its subcellular localization, from the host early endosome to the plasma membrane. Participates in the transcriptional regulation of cellular and viral mRNAs mainly by phosphorylating the viral transcriptional regulator ICP22. Functions as an antagonist of the host RLR-mediated antiviral responses via suppression of the transcription of cytosolic receptors RIGI and IFIH1. Facilitates immune evasion also by recruiting host RNF5 to initiate the 'Lys-27'-/'Lys-29'-linked polyubiquitination of STING1; leading to its degradation. Blocks host IFN-beta transactivation mediated by the cGAS-STING pathway by phosphorylating host IRF3. In turn, IRF3 binding to the IRF3-responsive promoters and downstream interferon stimulated genes/ISG expression are greatly impaired. Induces the activation of the host DNA damage response via H2AX phosphorylation to improve efficient viral replication and progeny production. This is Serine/threonine-protein kinase UL13 (UL13) from Suid herpesvirus 1 (strain NIA-3) (SuHV-1).